The chain runs to 35 residues: Leukocyte cysteine proteinase inhibitor 2 (35 aa).

The interval 1 to 35 is disordered; it reads LAGGLTEPRPADTEIQEIANKVKPQLEEKTNKKYD. The segment covering 24 to 35 has biased composition (basic and acidic residues); it reads PQLEEKTNKKYD.

It belongs to the cystatin family.

The protein resides in the cytoplasm. In terms of biological role, potent inhibitor of cathepsins L and S, and papain. The chain is Leukocyte cysteine proteinase inhibitor 2 from Sus scrofa (Pig).